A 292-amino-acid polypeptide reads, in one-letter code: D-tagatose-1,6-bisphosphate aldolase subunit KbaY (292 aa).

Aspartate 82 (proton donor) is an active-site residue. The Zn(2+) site is built by histidine 83 and histidine 180. Residue glycine 181 participates in dihydroxyacetone phosphate binding. Position 208 (histidine 208) interacts with Zn(2+). Dihydroxyacetone phosphate-binding positions include 209-211 and 230-233; these read GAS and NVAT.

The protein belongs to the class II fructose-bisphosphate aldolase family. TagBP aldolase KbaY subfamily. In terms of assembly, homotetramer. Forms a complex with KbaZ. It depends on Zn(2+) as a cofactor.

The enzyme catalyses D-tagatofuranose 1,6-bisphosphate = D-glyceraldehyde 3-phosphate + dihydroxyacetone phosphate. It functions in the pathway carbohydrate metabolism; D-tagatose 6-phosphate degradation; D-glyceraldehyde 3-phosphate and glycerone phosphate from D-tagatose 6-phosphate: step 2/2. Its function is as follows. Catalytic subunit of the tagatose-1,6-bisphosphate aldolase KbaYZ, which catalyzes the reversible aldol condensation of dihydroxyacetone phosphate (DHAP or glycerone-phosphate) with glyceraldehyde 3-phosphate (G3P) to produce tagatose 1,6-bisphosphate (TBP). Requires KbaZ subunit for full activity and stability. This chain is D-tagatose-1,6-bisphosphate aldolase subunit KbaY, found in Enterobacter sp. (strain 638).